Reading from the N-terminus, the 633-residue chain is Threonine--tRNA ligase (633 aa).

Residues Met-1–Thr-61 enclose the TGS domain. A catalytic region spans residues Asp-242–Pro-533. Cys-333, His-384, and His-510 together coordinate Zn(2+).

The protein belongs to the class-II aminoacyl-tRNA synthetase family. Homodimer. Zn(2+) serves as cofactor.

It is found in the cytoplasm. The enzyme catalyses tRNA(Thr) + L-threonine + ATP = L-threonyl-tRNA(Thr) + AMP + diphosphate + H(+). Its function is as follows. Catalyzes the attachment of threonine to tRNA(Thr) in a two-step reaction: L-threonine is first activated by ATP to form Thr-AMP and then transferred to the acceptor end of tRNA(Thr). Also edits incorrectly charged L-seryl-tRNA(Thr). The protein is Threonine--tRNA ligase of Laribacter hongkongensis (strain HLHK9).